The following is an 84-amino-acid chain: Sec-independent protein translocase protein TatA (84 aa).

A helical transmembrane segment spans residues 1 to 21 (MGGLQPWHWLIVIAVFVLLFG). The interval 46–84 (MQSDSNAAKSDQPEQITSERVVVDPSTQSTSSNSDKRPA) is disordered. Polar residues predominate over residues 48-63 (SDSNAAKSDQPEQITS).

The protein belongs to the TatA/E family. As to quaternary structure, the Tat system comprises two distinct complexes: a TatABC complex, containing multiple copies of TatA, TatB and TatC subunits, and a separate TatA complex, containing only TatA subunits. Substrates initially bind to the TatABC complex, which probably triggers association of the separate TatA complex to form the active translocon.

The protein localises to the cell membrane. Functionally, part of the twin-arginine translocation (Tat) system that transports large folded proteins containing a characteristic twin-arginine motif in their signal peptide across membranes. TatA could form the protein-conducting channel of the Tat system. The chain is Sec-independent protein translocase protein TatA from Mycolicibacterium gilvum (strain PYR-GCK) (Mycobacterium gilvum (strain PYR-GCK)).